We begin with the raw amino-acid sequence, 955 residues long: Mediator of RNA polymerase II transcription subunit 16 (955 aa).

The segment at 855-874 (ALPETNANANANQNGKSSTQ) is disordered. Polar residues predominate over residues 857–873 (PETNANANANQNGKSST).

The protein belongs to the Mediator complex subunit 16 family. Component of the Mediator complex.

Its subcellular location is the nucleus. Functionally, component of the Mediator complex, a coactivator involved in the regulated transcription of nearly all RNA polymerase II-dependent genes. Mediator functions as a bridge to convey information from gene-specific regulatory proteins to the basal RNA polymerase II transcription machinery. Mediator is recruited to promoters by direct interactions with regulatory proteins and serves as a scaffold for the assembly of a functional preinitiation complex with RNA polymerase II and the general transcription factors. The protein is Mediator of RNA polymerase II transcription subunit 16 (sin4) of Aspergillus fumigatus (strain ATCC MYA-4609 / CBS 101355 / FGSC A1100 / Af293) (Neosartorya fumigata).